The chain runs to 91 residues: Small ribosomal subunit protein uS19 (91 aa).

This sequence belongs to the universal ribosomal protein uS19 family.

Protein S19 forms a complex with S13 that binds strongly to the 16S ribosomal RNA. This chain is Small ribosomal subunit protein uS19, found in Colwellia psychrerythraea (strain 34H / ATCC BAA-681) (Vibrio psychroerythus).